We begin with the raw amino-acid sequence, 481 residues long: Methylenetetrahydrofolate--tRNA-(uracil-5-)-methyltransferase TrmFO (481 aa).

An FAD-binding site is contributed by 13 to 18 (GGGLAG).

This sequence belongs to the MnmG family. TrmFO subfamily. It depends on FAD as a cofactor.

The protein localises to the cytoplasm. The enzyme catalyses uridine(54) in tRNA + (6R)-5,10-methylene-5,6,7,8-tetrahydrofolate + NADH + H(+) = 5-methyluridine(54) in tRNA + (6S)-5,6,7,8-tetrahydrofolate + NAD(+). It catalyses the reaction uridine(54) in tRNA + (6R)-5,10-methylene-5,6,7,8-tetrahydrofolate + NADPH + H(+) = 5-methyluridine(54) in tRNA + (6S)-5,6,7,8-tetrahydrofolate + NADP(+). In terms of biological role, catalyzes the folate-dependent formation of 5-methyl-uridine at position 54 (M-5-U54) in all tRNAs. The sequence is that of Methylenetetrahydrofolate--tRNA-(uracil-5-)-methyltransferase TrmFO from Agrobacterium fabrum (strain C58 / ATCC 33970) (Agrobacterium tumefaciens (strain C58)).